Consider the following 468-residue polypeptide: Adenosylhomocysteinase (468 aa).

Substrate contacts are provided by Thr57, Asp132, and Glu194. 195-197 (TTT) provides a ligand contact to NAD(+). Residues Lys224 and Asp228 each contribute to the substrate site. Residues Asn229, 258-263 (GFGDVG), Glu281, Asn316, 337-339 (IGH), and Asn382 contribute to the NAD(+) site.

Belongs to the adenosylhomocysteinase family. It depends on NAD(+) as a cofactor.

It localises to the cytoplasm. It carries out the reaction S-adenosyl-L-homocysteine + H2O = L-homocysteine + adenosine. The protein operates within amino-acid biosynthesis; L-homocysteine biosynthesis; L-homocysteine from S-adenosyl-L-homocysteine: step 1/1. Functionally, may play a key role in the regulation of the intracellular concentration of adenosylhomocysteine. The protein is Adenosylhomocysteinase of Methylorubrum extorquens (strain CM4 / NCIMB 13688) (Methylobacterium extorquens).